The sequence spans 520 residues: ADP,ATP carrier protein 4 (520 aa).

12 consecutive transmembrane segments (helical) span residues 43 to 63, 80 to 100, 111 to 131, 166 to 186, 201 to 221, 240 to 260, 305 to 325, 339 to 359, 370 to 390, 399 to 419, 462 to 482, and 485 to 505; these read LSKF…QNLI, ISFL…AIYV, IFYL…YVIF, FSLF…LLFW, FYPL…QFLE, FHTL…IVGI, LIAT…GPWK, AAFI…FVVL, FTAA…FFAV, LIVA…IGAI, LGKS…PSAS, and SISV…FWAV.

It belongs to the ADP/ATP translocase tlc family.

It is found in the cell membrane. Functionally, provides the rickettsial cell with host ATP in exchange for rickettsial ADP. This is an obligate exchange system. This energy acquiring activity is an important component of rickettsial parasitism. The protein is ADP,ATP carrier protein 4 (tlcD) of Rickettsia bellii (strain RML369-C).